The chain runs to 514 residues: Activin receptor type-2A (514 aa).

The N-terminal stretch at 1-20 is a signal peptide; that stretch reads MGAATKLAFAVFLISCSSAG. The Extracellular portion of the chain corresponds to 21–136; that stretch reads SILGRSETKE…TSNPVTTKPP (116 aa). 5 disulfides stabilise this stretch: Cys-31-Cys-61, Cys-51-Cys-79, Cys-86-Cys-105, Cys-92-Cys-104, and Cys-106-Cys-111. Asn-46, Asn-67, and Asn-88 each carry an N-linked (GlcNAc...) asparagine glycan. A helical membrane pass occupies residues 137 to 162; the sequence is LFNTLLYSLVPIMVVAVIVLFSFWMY. Residues 163–514 lie on the Cytoplasmic side of the membrane; sequence RHHKLAYPPV…VDFPPKESSL (352 aa). In terms of domain architecture, Protein kinase spans 193–486; sequence LQLLEVKARG…EERIIQMQKL (294 aa). ATP contacts are provided by residues 199 to 207 and Lys-220; that span reads KARGRFGCV. Asp-323 acts as the Proton acceptor in catalysis.

The protein belongs to the protein kinase superfamily. TKL Ser/Thr protein kinase family. TGFB receptor subfamily.

It localises to the cell membrane. It carries out the reaction L-threonyl-[receptor-protein] + ATP = O-phospho-L-threonyl-[receptor-protein] + ADP + H(+). The enzyme catalyses L-seryl-[receptor-protein] + ATP = O-phospho-L-seryl-[receptor-protein] + ADP + H(+). In terms of biological role, receptor for activin A, activin B and inhibin A. Involved in transmembrane signaling. This Xenopus laevis (African clawed frog) protein is Activin receptor type-2A (acvr2a).